We begin with the raw amino-acid sequence, 732 residues long: MMLASSAPTAPSLLPPSSQPSAATTRADDCSSSTSPTNTSASDASMEMLTSLMNGAVAAAAAPGNALVKQESPPLTTPPLFNPDLALLQFSQLFQAQQAMVQFHNQQKQQQQIIQQQQQQQQQQQQNQNPSQSQSSSSDRKRSYPCTFQYCVICQKDVHSSKLPCHIRQCHVAKPMFQCPACDFTSTYSKNNVKSHMVSLHGLAGDPISYMDKYAGQVEEFMKLCFPNVRGRGRPMQGRSSPKSPTSPTQPGRRGSQASSLPSRRNTVSQNDLLATLQQHQQQQAAFHPLRNLRFNPLQSIFPAVLANNNNNSVLATNKHVNNFLIKQEESEVPPITMPMQDLKTMLDANSSPSPISLSSSIIPIQPIKPGENAQPKYMKSLDWTILNDLQMKGTVFADCRSNMELYAENIARKIENTKAFQSFVLSDDMRTVVEEVRSRVSIQLFEVMFAIHRMDIKVLNQNLVDSLLQIAPTNSDAQLLRKMENLSDPNEEFLLGLTKIDHIEEKLETMKHMYRFPEQVELLKENIIKYEIAVKVLSESRALRNVMQLVLAILNIGFFDDRQCLSINGFSVSDISSILSTNTPSGQSVQSILVTILKDEINLDLDELFGLIDVLEKIENDDVNSVAQDLMVLDDKTVRAEKEMEHSGSNIPLSEFVENAKTISKERWEHFKSLKTSIERLTIYLGSPLPRHQNLDAHSPFNNVLQMLRSLKTAIELDDASDDHHINVSSP.

Low complexity-rich tracts occupy residues 1–12 (MMLASSAPTAPS), 19–45 (QPSAATTRADDCSSSTSPTNTSASDAS), 121–137 (QQQQQQNQNPSQSQSSS), and 240–251 (SSPKSPTSPTQP). An N-terminal signal peptide occupies residues 1-27 (MMLASSAPTAPSLLPPSSQPSAATTRA). Disordered stretches follow at residues 1–45 (MMLA…SDAS), 121–141 (QQQQQQNQNPSQSQSSSSDRK), and 232–267 (RGRPMQGRSSPKSPTSPTQPGRRGSQASSLPSRRNT). Residues 256-267 (SQASSLPSRRNT) show a composition bias toward polar residues. Residues 355–732 (PISLSSSIIP…DDHHINVSSP (378 aa)) enclose the FH2 domain.

Belongs to the formin homology family. As to expression, transiently expressed in all mesoderm derived progenitor body wall muscle cells before they differentiate.

Acts redundantly with hlh-1 to promote body wall muscle cell and coelomocyte specification in postembryonic mesoderm progenitors, probably through suppression of sem-2. The sequence is that of Formin-homology and zinc finger domains protein 1 from Caenorhabditis elegans.